The primary structure comprises 546 residues: Chaperonin GroEL 1 (546 aa).

ATP is bound by residues 30–33 (TLGP), Lys-51, 87–91 (DGTTT), Gly-415, 479–481 (NAA), and Asp-495. A disordered region spans residues 526–546 (KEDAPMPGGMPGGMGGMGMDM). Residues 534–546 (GMPGGMGGMGMDM) are compositionally biased toward gly residues.

Belongs to the chaperonin (HSP60) family. In terms of assembly, forms a cylinder of 14 subunits composed of two heptameric rings stacked back-to-back. Interacts with the co-chaperonin GroES.

It is found in the cytoplasm. The catalysed reaction is ATP + H2O + a folded polypeptide = ADP + phosphate + an unfolded polypeptide.. Its function is as follows. Together with its co-chaperonin GroES, plays an essential role in assisting protein folding. The GroEL-GroES system forms a nano-cage that allows encapsulation of the non-native substrate proteins and provides a physical environment optimized to promote and accelerate protein folding. The sequence is that of Chaperonin GroEL 1 from Burkholderia pseudomallei (strain 1106a).